Here is a 732-residue protein sequence, read N- to C-terminus: Polyribonucleotide nucleotidyltransferase (732 aa).

Mg(2+) is bound by residues aspartate 502 and aspartate 508. The KH domain occupies 569-628 (PRLTSIQIPVDAIGMVIGKGGETIRSITEETGAEINIDDDGTVTIACSSPEGTKAAVETI). The S1 motif domain occupies 638–712 (GTIYMGKVRD…GKTKFALSIK (75 aa)).

This sequence belongs to the polyribonucleotide nucleotidyltransferase family. Mg(2+) is required as a cofactor.

The protein resides in the cytoplasm. It carries out the reaction RNA(n+1) + phosphate = RNA(n) + a ribonucleoside 5'-diphosphate. Its function is as follows. Involved in mRNA degradation. Catalyzes the phosphorolysis of single-stranded polyribonucleotides processively in the 3'- to 5'-direction. This Chlorobaculum parvum (strain DSM 263 / NCIMB 8327) (Chlorobium vibrioforme subsp. thiosulfatophilum) protein is Polyribonucleotide nucleotidyltransferase.